The chain runs to 437 residues: Regulator of phospholipase D SRF1 (437 aa).

The tract at residues 1–24 (MGDSNSSQEAYSDTTSTNASRIAD) is disordered. Residues 1–267 (MGDSNSSQEA…LTSLLLDNQY (267 aa)) are Cytoplasmic-facing. Phosphoserine occurs at positions 45 and 167. A helical membrane pass occupies residues 268–288 (LILGLRIFTGILSCISLALAI). The Extracellular segment spans residues 289 to 308 (KIFQNSRSNNTISESKIGQQ). Asparagine 297 is a glycosylation site (N-linked (GlcNAc...) asparagine). Residues 309 to 329 (PSTIMAICVNAVAIAYIIYIA) form a helical membrane-spanning segment. Topologically, residues 330 to 348 (HDEFAGKPVGLRNPLSKLK) are cytoplasmic. The chain crosses the membrane as a helical span at residues 349–369 (LILLDLLFIIFSSANLALAFN). At 370-403 (TRFDKEWVCTSIRRSNGSTYGYPKIPRICRKQEA) the chain is on the extracellular side. Asparagine 385 is a glycosylation site (N-linked (GlcNAc...) asparagine). The chain crosses the membrane as a helical span at residues 404–424 (LSAFLFVALFMWVITFSISIV). Over 425-437 (RVVEKVSSITNRN) the chain is Cytoplasmic.

As to quaternary structure, interacts with SPO14.

It is found in the membrane. In terms of biological role, regulator of phospholipase D (SPO14) which is required for SPO14 catalytic activity in mitotic cells. Essential to buffer the toxic effects of C16:0 platelet activating factor. This is Regulator of phospholipase D SRF1 (SRF1) from Saccharomyces cerevisiae (strain ATCC 204508 / S288c) (Baker's yeast).